Reading from the N-terminus, the 428-residue chain is Stabilizer of axonemal microtubules 4 (428 aa).

A disordered region spans residues 201-231; sequence AKEETGFTEESNKNPIVFQPPSQALPGDPVL.

As to quaternary structure, microtubule inner protein component of sperm flagellar doublet microtubules. Interacts with PPP1CA.

It localises to the cell projection. The protein localises to the cilium. It is found in the cytoplasm. The protein resides in the cytoskeleton. Its subcellular location is the flagellum axoneme. This chain is Stabilizer of axonemal microtubules 4, found in Bos taurus (Bovine).